The following is a 113-amino-acid chain: Large ribosomal subunit protein uL22 (113 aa).

Belongs to the universal ribosomal protein uL22 family. As to quaternary structure, part of the 50S ribosomal subunit.

Its function is as follows. This protein binds specifically to 23S rRNA; its binding is stimulated by other ribosomal proteins, e.g. L4, L17, and L20. It is important during the early stages of 50S assembly. It makes multiple contacts with different domains of the 23S rRNA in the assembled 50S subunit and ribosome. Functionally, the globular domain of the protein is located near the polypeptide exit tunnel on the outside of the subunit, while an extended beta-hairpin is found that lines the wall of the exit tunnel in the center of the 70S ribosome. The protein is Large ribosomal subunit protein uL22 of Roseiflexus sp. (strain RS-1).